Consider the following 148-residue polypeptide: MKALIVLGLVLLSVTVQGKVFERCELARTLKRLGMDGYRGISLANWMCLAKWESGYNTRATNYNAGDRSTDYGIFQINSRYWCNDGKTPGAVNACHLSCSALLQDNIADAVACAKRVVRDPQGIRAWVAWRNRCQNRDVRQYVQGCGV.

The signal sequence occupies residues 1–18; the sequence is MKALIVLGLVLLSVTVQG. Residues 19 to 148 form the C-type lysozyme domain; that stretch reads KVFERCELAR…VRQYVQGCGV (130 aa). 4 disulfide bridges follow: C24–C146, C48–C134, C83–C99, and C95–C113. Residues E53 and D71 contribute to the active site.

The protein belongs to the glycosyl hydrolase 22 family. As to quaternary structure, monomer.

Its subcellular location is the secreted. It carries out the reaction Hydrolysis of (1-&gt;4)-beta-linkages between N-acetylmuramic acid and N-acetyl-D-glucosamine residues in a peptidoglycan and between N-acetyl-D-glucosamine residues in chitodextrins.. Functionally, lysozymes have primarily a bacteriolytic function; those in tissues and body fluids are associated with the monocyte-macrophage system and enhance the activity of immunoagents. The polypeptide is Lysozyme C (LYZ) (Homo sapiens (Human)).